The following is a 122-amino-acid chain: Ribosome-binding factor A (122 aa).

It belongs to the RbfA family. As to quaternary structure, monomer. Binds 30S ribosomal subunits, but not 50S ribosomal subunits or 70S ribosomes.

The protein localises to the cytoplasm. In terms of biological role, one of several proteins that assist in the late maturation steps of the functional core of the 30S ribosomal subunit. Associates with free 30S ribosomal subunits (but not with 30S subunits that are part of 70S ribosomes or polysomes). Required for efficient processing of 16S rRNA. May interact with the 5'-terminal helix region of 16S rRNA. The sequence is that of Ribosome-binding factor A from Dichelobacter nodosus (strain VCS1703A).